Reading from the N-terminus, the 179-residue chain is MSSIDPPAGHTRPIVFFDISIGDTPAGRIKMELFDDITPKTAENFRQLCTGEHRINSVPQGYKKATFHRVIPQFMVQGGDFVRGDGTGSFSIYGAQFEDENFKVKHTGPGLLSMANSGPNTNGCQFFITTAPAEFLDGKHCVFGRVIDGLLTVRKIENVPTGANNRPKLQVRIAECGEM.

A PPIase cyclophilin-type domain is found at 16–178; that stretch reads FFDISIGDTP…LQVRIAECGE (163 aa).

It belongs to the cyclophilin-type PPIase family. PPIase H subfamily.

Its subcellular location is the nucleus. It catalyses the reaction [protein]-peptidylproline (omega=180) = [protein]-peptidylproline (omega=0). Functionally, PPIases accelerate the folding of proteins. It catalyzes the cis-trans isomerization of proline imidic peptide bonds in oligopeptides. This Cryptococcus neoformans var. neoformans serotype D (strain B-3501A) (Filobasidiella neoformans) protein is Peptidyl-prolyl cis-trans isomerase H (CYP3).